A 205-amino-acid chain; its full sequence is Outer-membrane lipoprotein LolB (205 aa).

The first 17 residues, 1-17 (MRLRLFLAASALALLSG), serve as a signal peptide directing secretion. C18 carries N-palmitoyl cysteine lipidation. C18 carries S-diacylglycerol cysteine lipidation.

Belongs to the LolB family. As to quaternary structure, monomer.

It localises to the cell outer membrane. Its function is as follows. Plays a critical role in the incorporation of lipoproteins in the outer membrane after they are released by the LolA protein. This Pseudomonas aeruginosa (strain LESB58) protein is Outer-membrane lipoprotein LolB.